Consider the following 115-residue polypeptide: Ribonuclease P protein component (115 aa).

The protein belongs to the RnpA family. As to quaternary structure, consists of a catalytic RNA component (M1 or rnpB) and a protein subunit.

It carries out the reaction Endonucleolytic cleavage of RNA, removing 5'-extranucleotides from tRNA precursor.. Its function is as follows. RNaseP catalyzes the removal of the 5'-leader sequence from pre-tRNA to produce the mature 5'-terminus. It can also cleave other RNA substrates such as 4.5S RNA. The protein component plays an auxiliary but essential role in vivo by binding to the 5'-leader sequence and broadening the substrate specificity of the ribozyme. The chain is Ribonuclease P protein component from Staphylococcus carnosus (strain TM300).